The primary structure comprises 225 residues: Cold-regulated 413 inner membrane protein 1, chloroplastic (225 aa).

The transit peptide at 1 to 76 directs the protein to the chloroplast; the sequence is MASLCLSSSR…RKRGSSVVCY (76 aa). Position 77 (Ala-77) is a topological domain, stromal. The chain crosses the membrane as a helical span at residues 78-98; the sequence is APISANSLQWISTISCLALML. Topologically, residues 99 to 102 are chloroplast intermembrane; the sequence is ARGT. A helical transmembrane segment spans residues 103–123; sequence GIHKSVVVPLFALHAPSSIVA. Residues 124–128 are Stromal-facing; that stretch reads WIKGE. The chain crosses the membrane as a helical span at residues 129-149; the sequence is YGVWAAFLALIARLFFTFPGE. Topologically, residues 150-151 are chloroplast intermembrane; that stretch reads LE. A helical transmembrane segment spans residues 152–172; the sequence is LPFIALLLVIVAPYQVMNIRG. Topologically, residues 173–175 are stromal; sequence KQE. The helical transmembrane segment at 176–196 threads the bilayer; the sequence is GAIIAIAISGFLAFQHFSRAG. The Chloroplast intermembrane segment spans residues 197 to 204; it reads SLEKAYEK. Residues 205–225 traverse the membrane as a helical segment; the sequence is GSVLATVAIIGVTVVSLLLLL.

The protein belongs to the Cold-regulated 413 protein family.

Its subcellular location is the plastid. It localises to the chloroplast inner membrane. The polypeptide is Cold-regulated 413 inner membrane protein 1, chloroplastic (COR413IM1) (Arabidopsis thaliana (Mouse-ear cress)).